The following is a 362-amino-acid chain: H-2 class I histocompatibility antigen, D-K alpha chain (362 aa).

A signal peptide spans 1–24 (MGAMVPRTLLLLLAAALAPAQTRA). The alpha-1 stretch occupies residues 25–114 (GPHSLRYFET…LLRYYNQSEG (90 aa)). Residues 25-306 (GPHSLRYFET…RWEPPPSTDS (282 aa)) lie on the Extracellular side of the membrane. A glycan (N-linked (GlcNAc...) asparagine) is linked at Asn-110. An alpha-2 region spans residues 115 to 206 (GSHTIQRLSG…ELGNATLLHT (92 aa)). A disulfide bond links Cys-125 and Cys-188. Residues Asn-200 and Asn-280 are each glycosylated (N-linked (GlcNAc...) asparagine). The interval 207-298 (DSPKAHVTHH…GLPEPLTLRW (92 aa)) is alpha-3. An Ig-like C1-type domain is found at 209-297 (PKAHVTHHPR…EGLPEPLTLR (89 aa)). A disulfide bridge links Cys-227 with Cys-283. The segment at 299–306 (EPPPSTDS) is connecting peptide. The helical transmembrane segment at 307 to 333 (YMVIVAVLGVLGAVAIIGAVVAFVMMM) threads the bilayer. The Cytoplasmic portion of the chain corresponds to 334 to 362 (RRNTGGKGGDYTLTPGSQSSEMSLPDCKA). The disordered stretch occupies residues 340 to 362 (KGGDYTLTPGSQSSEMSLPDCKA). A phosphoserine mark is found at Ser-353 and Ser-356.

This sequence belongs to the MHC class I family. As to quaternary structure, heterodimer of an alpha chain and a beta chain (beta-2-microglobulin). Polyubiquitinated in case of infection by murid herpesvirus 4, by the viral E3 ligase K3 (mK3), leading to target the protein for rapid degradation by the endoplasmic reticulum-associated degradation (ERAD) system. Ubiquitination takes place on lysine, as well as serine and threonine residues present in the cytoplasmic tail. Hydroxylated serine and threonine residues in the cytoplasmic tail are subject to ubiquitination via ester bonds instead of the classical isopeptide linkage. In terms of processing, hydroxylation of residues in the cytoplasmic tail.

It localises to the membrane. Functionally, involved in the presentation of foreign antigens to the immune system. The protein is H-2 class I histocompatibility antigen, D-K alpha chain (H2-D1) of Mus musculus (Mouse).